The following is a 180-amino-acid chain: p-cumate 2,3-dioxygenase system, small oxygenase component (180 aa).

Belongs to the bacterial ring-hydroxylating dioxygenase beta subunit family. The p-cumate 2,3-dioxygenase multicomponent enzyme system is composed of an electron transfer component and a dioxygenase component (iron sulfur protein (ISP)). The electron transfer component is composed of a ferredoxin reductase (CmtAa) and a ferredoxin (CmtAd), and the dioxygenase component is formed of a large alpha subunit (CmtAb) and a small beta subunit (CmtAc).

It participates in aromatic compound metabolism; p-cumate degradation; acetaldehyde and pyruvate from p-cumate. Its function is as follows. Component of the p-cumate 2,3-dioxygenase multicomponent enzyme system which catalyzes the incorporation of both atoms of molecular oxygen into p-cumate to form cis-2,3-dihydroxy-2,3-dihydro-p-cumate. The beta subunit seems to have a structural role in the holoenzyme. Also able to catalyze the cis-dihydroxylation of indole-2-carboxylate and indole-3-carboxylate. This chain is p-cumate 2,3-dioxygenase system, small oxygenase component, found in Pseudomonas putida (Arthrobacter siderocapsulatus).